The following is a 318-amino-acid chain: Transcriptional regulator NovG (318 aa).

Over residues V146 to G156 the composition is skewed to polar residues. The disordered stretch occupies residues V146–G176. Over residues T162–G176 the composition is skewed to basic and acidic residues.

Belongs to the ParB family.

Its function is as follows. Transcription regulator that specifically activates expression of genes involved in the novobiocin biosynthesis pathway. Binds 5'-GTTCRACTG(N)(11)CRGTYGAAC-3' DNA sequence. This chain is Transcriptional regulator NovG (novG), found in Streptomyces niveus (Streptomyces spheroides).